We begin with the raw amino-acid sequence, 200 residues long: Small ribosomal subunit protein uS4 (200 aa).

Residues 1-43 (MARYTGPRGRRDRRAGVMLSSMRKNPLEKKPYPPGEHGRDRQR) form a disordered region. The span at 25–43 (NPLEKKPYPPGEHGRDRQR) shows a compositional bias: basic and acidic residues. The region spanning 92–158 (LRMDNVVYRM…QPIQEAVEQV (67 aa)) is the S4 RNA-binding domain.

Belongs to the universal ribosomal protein uS4 family. As to quaternary structure, part of the 30S ribosomal subunit. Contacts protein S5. The interaction surface between S4 and S5 is involved in control of translational fidelity.

Functionally, one of the primary rRNA binding proteins, it binds directly to 16S rRNA where it nucleates assembly of the body of the 30S subunit. With S5 and S12 plays an important role in translational accuracy. The sequence is that of Small ribosomal subunit protein uS4 from Rubrobacter xylanophilus (strain DSM 9941 / JCM 11954 / NBRC 16129 / PRD-1).